We begin with the raw amino-acid sequence, 45 residues long: Lysis protein for colicin E1 (45 aa).

The first 17 residues, M1 to G17, serve as a signal peptide directing secretion. C18 carries the N-palmitoyl cysteine lipid modification. C18 carries the S-diacylglycerol cysteine lipid modification.

Its subcellular location is the cell outer membrane. Its function is as follows. Lysis proteins are required for both colicin release and partial cell lysis. This Escherichia coli protein is Lysis protein for colicin E1 (lys).